The following is a 380-amino-acid chain: Probable dual-specificity RNA methyltransferase RlmN (380 aa).

Residue glutamate 112 is the Proton acceptor of the active site. Positions 118 to 358 constitute a Radical SAM core domain; it reads YPDRVTACLS…TTVRDTRGRE (241 aa). A disulfide bridge links cysteine 125 with cysteine 363. Residues cysteine 132, cysteine 136, and cysteine 139 each contribute to the [4Fe-4S] cluster site. Residues 187–188, serine 221, 244–246, and asparagine 320 each bind S-adenosyl-L-methionine; these read GE and SLH. The active-site S-methylcysteine intermediate is the cysteine 363.

The protein belongs to the radical SAM superfamily. RlmN family. [4Fe-4S] cluster is required as a cofactor.

Its subcellular location is the cytoplasm. The catalysed reaction is adenosine(2503) in 23S rRNA + 2 reduced [2Fe-2S]-[ferredoxin] + 2 S-adenosyl-L-methionine = 2-methyladenosine(2503) in 23S rRNA + 5'-deoxyadenosine + L-methionine + 2 oxidized [2Fe-2S]-[ferredoxin] + S-adenosyl-L-homocysteine. It catalyses the reaction adenosine(37) in tRNA + 2 reduced [2Fe-2S]-[ferredoxin] + 2 S-adenosyl-L-methionine = 2-methyladenosine(37) in tRNA + 5'-deoxyadenosine + L-methionine + 2 oxidized [2Fe-2S]-[ferredoxin] + S-adenosyl-L-homocysteine. In terms of biological role, specifically methylates position 2 of adenine 2503 in 23S rRNA and position 2 of adenine 37 in tRNAs. The protein is Probable dual-specificity RNA methyltransferase RlmN of Salinispora arenicola (strain CNS-205).